We begin with the raw amino-acid sequence, 65 residues long: Large ribosomal subunit protein bL35 (65 aa).

The tract at residues 1–26 (MPKMKSNKGASKRFKKTASGGFKCKQ) is disordered.

Belongs to the bacterial ribosomal protein bL35 family.

This Idiomarina loihiensis (strain ATCC BAA-735 / DSM 15497 / L2-TR) protein is Large ribosomal subunit protein bL35.